The sequence spans 324 residues: Phospho-N-acetylmuramoyl-pentapeptide-transferase (324 aa).

10 consecutive transmembrane segments (helical) span residues 9-29, 53-73, 77-97, 117-137, 147-167, 176-196, 201-221, 227-247, 253-273, and 304-324; these read TFAV…PFLV, TMGA…FSFI, VSAA…LGFL, FLGQ…NDFA, IEVD…VGFS, LDGL…VIAF, MDVA…LLFN, IFMG…ISIL, LLLL…LQVF, and VLTF…VVIF.

It belongs to the glycosyltransferase 4 family. MraY subfamily. Mg(2+) is required as a cofactor.

Its subcellular location is the cell membrane. It catalyses the reaction UDP-N-acetyl-alpha-D-muramoyl-L-alanyl-gamma-D-glutamyl-meso-2,6-diaminopimeloyl-D-alanyl-D-alanine + di-trans,octa-cis-undecaprenyl phosphate = di-trans,octa-cis-undecaprenyl diphospho-N-acetyl-alpha-D-muramoyl-L-alanyl-D-glutamyl-meso-2,6-diaminopimeloyl-D-alanyl-D-alanine + UMP. Its pathway is cell wall biogenesis; peptidoglycan biosynthesis. Catalyzes the initial step of the lipid cycle reactions in the biosynthesis of the cell wall peptidoglycan: transfers peptidoglycan precursor phospho-MurNAc-pentapeptide from UDP-MurNAc-pentapeptide onto the lipid carrier undecaprenyl phosphate, yielding undecaprenyl-pyrophosphoryl-MurNAc-pentapeptide, known as lipid I. The sequence is that of Phospho-N-acetylmuramoyl-pentapeptide-transferase from Listeria monocytogenes serovar 1/2a (strain ATCC BAA-679 / EGD-e).